We begin with the raw amino-acid sequence, 348 residues long: Dihydroorotase (348 aa).

Positions 17 and 19 each coordinate Zn(2+). Residues 19 to 21 (HLR) and N45 contribute to the substrate site. Zn(2+)-binding residues include K103, H140, and H178. N6-carboxylysine is present on K103. Residue H140 coordinates substrate. L223 provides a ligand contact to substrate. A Zn(2+)-binding site is contributed by D251. D251 is an active-site residue. 2 residues coordinate substrate: H255 and A267.

It belongs to the metallo-dependent hydrolases superfamily. DHOase family. Class II DHOase subfamily. In terms of assembly, homodimer. Requires Zn(2+) as cofactor.

It catalyses the reaction (S)-dihydroorotate + H2O = N-carbamoyl-L-aspartate + H(+). It participates in pyrimidine metabolism; UMP biosynthesis via de novo pathway; (S)-dihydroorotate from bicarbonate: step 3/3. Its function is as follows. Catalyzes the reversible cyclization of carbamoyl aspartate to dihydroorotate. This chain is Dihydroorotase, found in Salmonella paratyphi B (strain ATCC BAA-1250 / SPB7).